The following is a 182-amino-acid chain: Large ribosomal subunit protein uL22 (182 aa).

The tract at residues 155 to 182 is disordered; the sequence is SGVDGAKQGKKKKKTDGVEKATTKRQKQ.

Belongs to the universal ribosomal protein uL22 family.

The polypeptide is Large ribosomal subunit protein uL22 (RpL17) (Carabus granulatus (Ground beetle)).